The sequence spans 323 residues: PTS system mannose-specific EIIAB component (323 aa).

A PTS EIIA type-4 domain is found at 2 to 124 (TIAIVIGTHG…VALAVETGRE (123 aa)). His-10 acts as the Tele-phosphohistidine intermediate; for EIIA activity in catalysis. His-10 is subject to Phosphohistidine; by HPr. Lys-55 carries the N6-acetyllysine modification. Positions 137–155 (AAPAPAAAAPKAAPTPAKP) are hinge. A PTS EIIB type-4 domain is found at 157–320 (GPNDYMVIGL…KLKMMDLISK (164 aa)). The active-site Pros-phosphohistidine intermediate; for EIIB activity is His-175. His-175 carries the post-translational modification Phosphohistidine; by EIIA. At Lys-234 the chain carries N6-acetyllysine.

In terms of assembly, homodimer.

The protein resides in the cytoplasm. Its subcellular location is the cell inner membrane. It catalyses the reaction D-mannose(out) + N(pros)-phospho-L-histidyl-[protein] = D-mannose 6-phosphate(in) + L-histidyl-[protein]. In terms of biological role, the phosphoenolpyruvate-dependent sugar phosphotransferase system (sugar PTS), a major carbohydrate active transport system, catalyzes the phosphorylation of incoming sugar substrates concomitantly with their translocation across the cell membrane. The enzyme II ManXYZ PTS system is involved in mannose transport. The polypeptide is PTS system mannose-specific EIIAB component (manX) (Escherichia coli O157:H7).